Reading from the N-terminus, the 421-residue chain is Tyrosine--tRNA ligase (421 aa).

Tyrosine 38 lines the L-tyrosine pocket. The 'HIGH' region signature appears at 43–52 (PTGDSLHIGH). Tyrosine 169 and glutamine 173 together coordinate L-tyrosine. Positions 231 to 235 (KFGKS) match the 'KMSKS' region motif. Lysine 234 is an ATP binding site. The S4 RNA-binding domain maps to 353–419 (KNLVDFLVDT…GKKKYTLVHI (67 aa)).

It belongs to the class-I aminoacyl-tRNA synthetase family. TyrS type 1 subfamily. Homodimer.

It is found in the cytoplasm. It carries out the reaction tRNA(Tyr) + L-tyrosine + ATP = L-tyrosyl-tRNA(Tyr) + AMP + diphosphate + H(+). In terms of biological role, catalyzes the attachment of tyrosine to tRNA(Tyr) in a two-step reaction: tyrosine is first activated by ATP to form Tyr-AMP and then transferred to the acceptor end of tRNA(Tyr). This chain is Tyrosine--tRNA ligase, found in Lactobacillus delbrueckii subsp. bulgaricus (strain ATCC 11842 / DSM 20081 / BCRC 10696 / JCM 1002 / NBRC 13953 / NCIMB 11778 / NCTC 12712 / WDCM 00102 / Lb 14).